The primary structure comprises 600 residues: Putative fucosyltransferase R654 (600 aa).

The protein belongs to the glycosyltransferase 10 family.

In Acanthamoeba polyphaga mimivirus (APMV), this protein is Putative fucosyltransferase R654.